The primary structure comprises 282 residues: Pantothenate synthetase (282 aa).

30–37 provides a ligand contact to ATP; the sequence is MGYLHEGH. Catalysis depends on histidine 37, which acts as the Proton donor. Glutamine 61 lines the (R)-pantoate pocket. Position 61 (glutamine 61) interacts with beta-alanine. 147–150 is an ATP binding site; it reads GMKD. Position 153 (glutamine 153) interacts with (R)-pantoate. ATP contacts are provided by residues valine 176 and 184–187; that span reads KSSR.

This sequence belongs to the pantothenate synthetase family. In terms of assembly, homodimer.

It is found in the cytoplasm. The enzyme catalyses (R)-pantoate + beta-alanine + ATP = (R)-pantothenate + AMP + diphosphate + H(+). The protein operates within cofactor biosynthesis; (R)-pantothenate biosynthesis; (R)-pantothenate from (R)-pantoate and beta-alanine: step 1/1. Its function is as follows. Catalyzes the condensation of pantoate with beta-alanine in an ATP-dependent reaction via a pantoyl-adenylate intermediate. The sequence is that of Pantothenate synthetase from Bacillus cereus (strain ATCC 10987 / NRS 248).